Reading from the N-terminus, the 321-residue chain is MITRLFENDKQLEGFFSSLDKKKKYLLALSGGSDSLFLMYLLKSRAIFFTAVHVDYGWRETSYQEASDLAALCEQEQIPFILDRPEATDPMDSRDIENAARRYRYELFYRLCKEKCFSGVFLGHHADDQAETILKRVFEGAHLGNLKGMSAQVMYRDVALLRPLLHIPKHKIVEALDSHQVQYVQDITNCNERFLRARMRERLFPYLQDVFGKNIRDPLLSLAGDSAELREYLDQQTAPFLLRVVDNERGKLLPIEQELLKTPFLAKWVCKQFFLNEGLVASKSFLQTVYDHLMTGSTARLRLRNRTVLVKARGVIIESIY.

30–35 contributes to the ATP binding site; sequence SGGSDS.

This sequence belongs to the tRNA(Ile)-lysidine synthase family.

The protein resides in the cytoplasm. It catalyses the reaction cytidine(34) in tRNA(Ile2) + L-lysine + ATP = lysidine(34) in tRNA(Ile2) + AMP + diphosphate + H(+). Its function is as follows. Ligates lysine onto the cytidine present at position 34 of the AUA codon-specific tRNA(Ile) that contains the anticodon CAU, in an ATP-dependent manner. Cytidine is converted to lysidine, thus changing the amino acid specificity of the tRNA from methionine to isoleucine. The chain is tRNA(Ile)-lysidine synthase from Chlamydia trachomatis serovar L2 (strain ATCC VR-902B / DSM 19102 / 434/Bu).